The sequence spans 429 residues: DNA primase DnaG (429 aa).

Residues 172–246 (DSIIVVEGRN…DVDFIARAPP (75 aa)) enclose the Toprim domain. The Mg(2+) site is built by glutamate 178, aspartate 220, and aspartate 222. The disordered stretch occupies residues 287–322 (RNTKELEERQGNELKNERPEKINENEESEKNVELKE).

It belongs to the archaeal DnaG primase family. Forms a ternary complex with MCM helicase and DNA. Component of the archaeal exosome complex. Mg(2+) is required as a cofactor.

The enzyme catalyses ssDNA + n NTP = ssDNA/pppN(pN)n-1 hybrid + (n-1) diphosphate.. RNA polymerase that catalyzes the synthesis of short RNA molecules used as primers for DNA polymerase during DNA replication. Also part of the exosome, which is a complex involved in RNA degradation. Acts as a poly(A)-binding protein that enhances the interaction between heteromeric, adenine-rich transcripts and the exosome. The sequence is that of DNA primase DnaG from Picrophilus torridus (strain ATCC 700027 / DSM 9790 / JCM 10055 / NBRC 100828 / KAW 2/3).